Consider the following 42-residue polypeptide: Photosystem II reaction center protein J (42 aa).

A helical transmembrane segment spans residues 10 to 30; that stretch reads IPLWLVGTVVGTLAIGLLAVF.

The protein belongs to the PsbJ family. PSII is composed of 1 copy each of membrane proteins PsbA, PsbB, PsbC, PsbD, PsbE, PsbF, PsbH, PsbI, PsbJ, PsbK, PsbL, PsbM, PsbT, PsbX, PsbY, PsbZ, Psb30/Ycf12, at least 3 peripheral proteins of the oxygen-evolving complex and a large number of cofactors. It forms dimeric complexes.

Its subcellular location is the plastid. The protein localises to the chloroplast thylakoid membrane. Its function is as follows. One of the components of the core complex of photosystem II (PSII). PSII is a light-driven water:plastoquinone oxidoreductase that uses light energy to abstract electrons from H(2)O, generating O(2) and a proton gradient subsequently used for ATP formation. It consists of a core antenna complex that captures photons, and an electron transfer chain that converts photonic excitation into a charge separation. The sequence is that of Photosystem II reaction center protein J from Chlamydomonas reinhardtii (Chlamydomonas smithii).